A 119-amino-acid polypeptide reads, in one-letter code: Ribonuclease P protein component (119 aa).

Belongs to the RnpA family. As to quaternary structure, consists of a catalytic RNA component (M1 or rnpB) and a protein subunit.

The catalysed reaction is Endonucleolytic cleavage of RNA, removing 5'-extranucleotides from tRNA precursor.. Its function is as follows. RNaseP catalyzes the removal of the 5'-leader sequence from pre-tRNA to produce the mature 5'-terminus. It can also cleave other RNA substrates such as 4.5S RNA. The protein component plays an auxiliary but essential role in vivo by binding to the 5'-leader sequence and broadening the substrate specificity of the ribozyme. This Bacillus cereus (strain ZK / E33L) protein is Ribonuclease P protein component.